The sequence spans 120 residues: Small ribosomal subunit protein uS17m (120 aa).

The transit peptide at 1–20 (MSIVRSSVHAKWVVGKVIGT) directs the protein to the mitochondrion.

Belongs to the universal ribosomal protein uS17 family. In terms of assembly, component of the mitochondrial ribosome small subunit (28S) which comprises a 12S rRNA and about 30 distinct proteins.

It is found in the mitochondrion. The protein is Small ribosomal subunit protein uS17m (Mrps17) of Mus musculus (Mouse).